The sequence spans 419 residues: Histidine--tRNA ligase (419 aa).

The protein belongs to the class-II aminoacyl-tRNA synthetase family. In terms of assembly, homodimer.

The protein localises to the cytoplasm. The enzyme catalyses tRNA(His) + L-histidine + ATP = L-histidyl-tRNA(His) + AMP + diphosphate + H(+). This chain is Histidine--tRNA ligase, found in Trichlorobacter lovleyi (strain ATCC BAA-1151 / DSM 17278 / SZ) (Geobacter lovleyi).